The primary structure comprises 258 residues: Synaptosomal-associated protein 29 (258 aa).

The tract at residues 1–43 (MSAYPRSYNPFDEDAEDEDARPAPWSDSRDLADGPGAPADRQQ) is disordered. Serine 65, serine 77, and serine 114 each carry phosphoserine. Positions 76–107 (VSAEELVRQRGALERTEKMVDKMEQDLKTSQK) form a coiled coil. Disordered regions lie at residues 127–147 (PAET…GRLK) and 161–188 (QASH…SSEA). A phosphothreonine mark is found at threonine 130 and threonine 137. The segment covering 131–142 (PSAQNGTLTPQP) has biased composition (polar residues). Phosphoserine occurs at positions 163, 182, 185, 204, and 210. In terms of domain architecture, t-SNARE coiled-coil homology spans 196–258 (RACHQRIDSN…TSTERKVRQL (63 aa)).

It belongs to the SNAP-25 family. In terms of assembly, forms a SNARE complex, composed of VAMP8, SNAP29 and STX17, involved in fusion of autophagosome with lysosome. Interacts with multiple syntaxins including STX6. Interacts with EIPR1. Interacts with STX17; this interaction is increased in the absence of TMEM39A.

It localises to the cytoplasm. It is found in the golgi apparatus membrane. The protein resides in the cytoplasmic vesicle. Its subcellular location is the autophagosome membrane. The protein localises to the cell projection. It localises to the cilium membrane. Its function is as follows. SNAREs, soluble N-ethylmaleimide-sensitive factor-attachment protein receptors, are essential proteins for fusion of cellular membranes. SNAREs localized on opposing membranes assemble to form a trans-SNARE complex, an extended, parallel four alpha-helical bundle that drives membrane fusion. SNAP29 is a SNARE involved in autophagy through the direct control of autophagosome membrane fusion with the lysososome membrane. Also plays a role in ciliogenesis by regulating membrane fusions. The sequence is that of Synaptosomal-associated protein 29 from Bos taurus (Bovine).